The sequence spans 213 residues: Sclerostin (213 aa).

The N-terminal stretch at 1–23 (MQLPLALCLVCLLVHAAFRVVEG) is a signal peptide. Residues 41 to 71 (GEYPEPPPELENNKTMNRAENGGRPPHHPFE) are disordered. Asparagine 53 carries an N-linked (GlcNAc...) asparagine glycan. 4 disulfides stabilise this stretch: cysteine 80/cysteine 134, cysteine 94/cysteine 148, cysteine 105/cysteine 165, and cysteine 109/cysteine 167. In terms of domain architecture, CTCK spans 82-172 (ELHFTRYVTD…ASCKCKRLTR (91 aa)). The N-linked (GlcNAc...) asparagine glycan is linked to asparagine 175. Residues 178-213 (ELKDFGPEAARPQKGRKPRPRARGAKANQAELENAY) are disordered. A compositionally biased stretch (basic residues) spans 190–201 (QKGRKPRPRARG).

It belongs to the sclerostin family. In terms of assembly, interacts with LRP4 (via the extracellular domain); the interaction facilitates the inhibition of Wnt signaling. Interacts with LRP5 (via the first two YWTD-EGF repeat domains); the interaction inhibits Wnt-mediated signaling. Interacts with LRP6.

It localises to the secreted. It is found in the extracellular space. The protein resides in the extracellular matrix. Negative regulator of bone growth that acts through inhibition of Wnt signaling and bone formation. The polypeptide is Sclerostin (Chlorocebus aethiops (Green monkey)).